The following is a 159-amino-acid chain: Large ribosomal subunit protein mL43 (159 aa).

Residues 123 to 159 (SPSIQGQWHPFTNKPTALGGLRPREVQNPAPTQRPAQ) are disordered.

It belongs to the mitochondrion-specific ribosomal protein mL43 family. As to quaternary structure, component of the mitochondrial ribosome large subunit (39S) which comprises a 16S rRNA and about 50 distinct proteins.

It localises to the mitochondrion. The chain is Large ribosomal subunit protein mL43 (MRPL43) from Bos taurus (Bovine).